An 81-amino-acid polypeptide reads, in one-letter code: Large ribosomal subunit protein uL29c (81 aa).

The protein belongs to the universal ribosomal protein uL29 family.

Its subcellular location is the plastid. It is found in the chloroplast. This is Large ribosomal subunit protein uL29c from Phaeodactylum tricornutum (strain CCAP 1055/1).